The chain runs to 214 residues: MRVRYKPWAEDYLKDHPELVDMDGQHAGKMTEWFDKTQPIHIEIGSGMGQFITTLAAQNPHINYISMEREKSIVYKVLDKVKEMGLTNLKIICNDAIELNEYFKDGEVSRIYLNFSDPWPKNRHAKRRLTYHTFLALYQQILNDEGDLHFKTDNRGLFAYSLESMSQFGMYFTKINLNLHQEDDGSNILTEYEKKFSDKGSRIYRMEAKFHSQK.

Residues Glu43, Glu68, Asp95, and Asp117 each contribute to the S-adenosyl-L-methionine site. Residue Asp117 is part of the active site. Substrate contacts are provided by residues Lys121, Asp153, and 190 to 193 (TEYE).

Belongs to the class I-like SAM-binding methyltransferase superfamily. TrmB family.

It catalyses the reaction guanosine(46) in tRNA + S-adenosyl-L-methionine = N(7)-methylguanosine(46) in tRNA + S-adenosyl-L-homocysteine. It functions in the pathway tRNA modification; N(7)-methylguanine-tRNA biosynthesis. Functionally, catalyzes the formation of N(7)-methylguanine at position 46 (m7G46) in tRNA. The chain is tRNA (guanine-N(7)-)-methyltransferase from Staphylococcus aureus (strain USA300).